A 160-amino-acid polypeptide reads, in one-letter code: Sulfur-rich protein (160 aa).

2 helical membrane passes run 63–83 and 92–112; these read ITMIVLGIILLIAGLALTFVL and FLFLIPAVIGLVKLLATSVFM.

The protein localises to the membrane. This Chlamydia abortus (strain DSM 27085 / S26/3) (Chlamydophila abortus) protein is Sulfur-rich protein (srp).